We begin with the raw amino-acid sequence, 268 residues long: Small ribosomal subunit protein uS10m (268 aa).

The transit peptide at 1–64 directs the protein to the mitochondrion; sequence MIIRPVVRSL…RITTTTEAPK (64 aa).

It belongs to the universal ribosomal protein uS10 family. In terms of assembly, component of the mitochondrial small ribosomal subunit (mt-SSU). Mature N.crassa 74S mitochondrial ribosomes consist of a small (37S) and a large (54S) subunit. The 37S small subunit contains a 16S ribosomal RNA (16S mt-rRNA) and 32 different proteins. The 54S large subunit contains a 23S rRNA (23S mt-rRNA) and 42 different proteins.

The protein localises to the mitochondrion. Component of the mitochondrial ribosome (mitoribosome), a dedicated translation machinery responsible for the synthesis of mitochondrial genome-encoded proteins, including at least some of the essential transmembrane subunits of the mitochondrial respiratory chain. The mitoribosomes are attached to the mitochondrial inner membrane and translation products are cotranslationally integrated into the membrane. This chain is Small ribosomal subunit protein uS10m (mrp-10), found in Neurospora crassa (strain ATCC 24698 / 74-OR23-1A / CBS 708.71 / DSM 1257 / FGSC 987).